The following is a 22-amino-acid chain: GVVDILKGAAKDIAGHLASKVM.

Position 22 is a methionine amide (Met22).

Expressed by the skin glands.

The protein localises to the secreted. Its function is as follows. Antibacterial peptide that inhibits Gram-negative bacteria A.actinomycetemcomitans ATCC 29522 (MIC=222.37 uM) and E.coli ATCC 25922 (MIC=114.04 uM). Also has antifungal activity against C.albicans ATCC 18804 (MIC=233.55 uM) and C.lusitaniae ATCC 56936 (MIC=233.55 uM). No activity against the Gram-positive bacterium S.aureus ATCC 25923. Shows virtually no hemolytic activity towards rabbit erythrocytes. This chain is Ocellatin-LB1, found in Leptodactylus labyrinthicus (Labyrinth frog).